A 249-amino-acid chain; its full sequence is MGEAFAERVAVVTGAASGIGAATARLLAERGAAVVIGDVAEGADDVARALRDAGHRALWVRTDVTDEDSVAALMDRAAAEFGSLDVLVANAGIAEPKAPLHELDVAAWRRVIEIDLTGVALCGKHALRHMSAAGSGAIVNVSSILGAVGQANSSSYSAAKAGVANLTRSAAVTYAASGIRVNAVAPGYADTPLVAGLPADVRATMAARQPIGRLARPEEVAEAIAFLASDAASFVVGAILAVDGGYTAV.

Asp-38, Asp-63, Val-64, Asn-90, Tyr-156, Lys-160, Ala-189, and Thr-191 together coordinate NAD(+). The active-site Proton acceptor is the Tyr-156.

This sequence belongs to the short-chain dehydrogenases/reductases (SDR) family. As to quaternary structure, homotetramer.

It carries out the reaction cis-4-hydroxycyclohexane-1-carboxylate + NAD(+) = 4-oxocyclohexane-1-carboxylate + NADH + H(+). Dehydrogenase involved in a cyclohexanecarboxylate (CHCA) degradation pathway. Catalyzes the NAD(+)-dependent dehydrogenation of cis-4-hydroxycyclohexanecarboxylate (cis-4-hydroxyCHCA) to form 4-oxocyclohexanecarboxylate (4-oxoCHCA). Is highly specific for the cis-4-hydroxy derivative and shows only weak activity with trans-4-hydroxyCHCA. Cannot use NADP(+). This is Cis-4-hydroxycyclohexanecarboxylate dehydrogenase from Sinomonas cyclohexanicum (Corynebacterium cyclohexanicum).